We begin with the raw amino-acid sequence, 433 residues long: 3-phosphoshikimate 1-carboxyvinyltransferase (433 aa).

3-phosphoshikimate contacts are provided by Lys-22, Ser-23, and Arg-27. A phosphoenolpyruvate-binding site is contributed by Lys-22. Phosphoenolpyruvate contacts are provided by Gly-95 and Arg-123. 3-phosphoshikimate-binding residues include Ser-166, Gln-168, Asp-314, and Lys-341. Gln-168 contacts phosphoenolpyruvate. Catalysis depends on Asp-314, which acts as the Proton acceptor. Phosphoenolpyruvate is bound by residues Arg-345 and Arg-386.

This sequence belongs to the EPSP synthase family. In terms of assembly, monomer.

It is found in the cytoplasm. It carries out the reaction 3-phosphoshikimate + phosphoenolpyruvate = 5-O-(1-carboxyvinyl)-3-phosphoshikimate + phosphate. The protein operates within metabolic intermediate biosynthesis; chorismate biosynthesis; chorismate from D-erythrose 4-phosphate and phosphoenolpyruvate: step 6/7. Catalyzes the transfer of the enolpyruvyl moiety of phosphoenolpyruvate (PEP) to the 5-hydroxyl of shikimate-3-phosphate (S3P) to produce enolpyruvyl shikimate-3-phosphate and inorganic phosphate. The chain is 3-phosphoshikimate 1-carboxyvinyltransferase from Acidithiobacillus ferrooxidans (strain ATCC 23270 / DSM 14882 / CIP 104768 / NCIMB 8455) (Ferrobacillus ferrooxidans (strain ATCC 23270)).